Here is a 511-residue protein sequence, read N- to C-terminus: 2-isopropylmalate synthase (511 aa).

The Pyruvate carboxyltransferase domain maps to 5–267 (IQIFDTTLRD…QTQINLEETK (263 aa)). The Mn(2+) site is built by D14, H202, H204, and N238. Positions 391–511 (KVETLQLQFV…NTKVEEGIHS (121 aa)) are regulatory domain.

This sequence belongs to the alpha-IPM synthase/homocitrate synthase family. LeuA type 1 subfamily. In terms of assembly, homodimer. The cofactor is Mn(2+).

The protein resides in the cytoplasm. The enzyme catalyses 3-methyl-2-oxobutanoate + acetyl-CoA + H2O = (2S)-2-isopropylmalate + CoA + H(+). It functions in the pathway amino-acid biosynthesis; L-leucine biosynthesis; L-leucine from 3-methyl-2-oxobutanoate: step 1/4. Functionally, catalyzes the condensation of the acetyl group of acetyl-CoA with 3-methyl-2-oxobutanoate (2-ketoisovalerate) to form 3-carboxy-3-hydroxy-4-methylpentanoate (2-isopropylmalate). The chain is 2-isopropylmalate synthase from Staphylococcus saprophyticus subsp. saprophyticus (strain ATCC 15305 / DSM 20229 / NCIMB 8711 / NCTC 7292 / S-41).